The sequence spans 527 residues: Probable glucomannan 4-beta-mannosyltransferase 9 (527 aa).

Residues 37-59 (AMSVMLFVEKVYMSVVLVGVHLF) form a helical membrane-spanning segment. Aspartate 131 is an active-site residue. Aspartate 190 and aspartate 192 together coordinate substrate. Aspartate 284 is a catalytic residue. 4 consecutive transmembrane segments (helical) span residues 363–383 (IIGH…TVLI), 399–419 (IVTI…IFWV), 478–498 (ALEL…IAYG), and 505–525 (FLFL…GTIV).

It belongs to the glycosyltransferase 2 family. Plant cellulose synthase-like A subfamily.

The protein resides in the golgi apparatus membrane. The catalysed reaction is GDP-mannose + (glucomannan)n = GDP + (glucomannan)n+1.. Functionally, probable mannan synthase which consists of a 4-beta-mannosyltransferase activity on mannan using GDP-mannose. The beta-1,4-mannan product is the backbone for galactomannan synthesis by galactomannan galactosyltransferase. Galactomannan is a noncellulosic polysaccharides of plant cell wall. The protein is Probable glucomannan 4-beta-mannosyltransferase 9 of Oryza sativa subsp. japonica (Rice).